The chain runs to 496 residues: Fibronectin type III and SPRY domain-containing protein 1 (496 aa).

Residues 4-99 (QREALRKIIT…ALESSEELLE (96 aa)) adopt a coiled-coil conformation. Residues 105–162 (LQASDSEDFSQAAKEIKDGITMAPAFRLSLKAKVSDNMSHLMVDFAQERQMLQALKFL) form the COS domain. A Fibronectin type-III domain is found at 164 to 268 (VPSAPTIDLA…EPVTLETPAF (105 aa)). The region spanning 290–477 (WDAMGGKVQD…VTTGLQVPSA (188 aa)) is the B30.2/SPRY domain. Residues 301–336 (KAREKEGKGRTASPVNSPARGTPSPKRMSSGRGGRD) form a disordered region. Arginine 310 and arginine 320 each carry omega-N-methylarginine.

In terms of assembly, oligomerization is required for binding to microtubules.

It localises to the cytoplasm. The protein resides in the cytoskeleton. Its subcellular location is the microtubule organizing center. The protein localises to the centrosome. It is found in the nucleus. It localises to the cleavage furrow. In terms of biological role, may be involved in microtubule organization and stabilization. In Mus musculus (Mouse), this protein is Fibronectin type III and SPRY domain-containing protein 1 (Fsd1).